Reading from the N-terminus, the 246-residue chain is tRNA pseudouridine synthase A (246 aa).

D53 serves as the catalytic Nucleophile. Y112 lines the substrate pocket.

This sequence belongs to the tRNA pseudouridine synthase TruA family. In terms of assembly, homodimer.

It catalyses the reaction uridine(38/39/40) in tRNA = pseudouridine(38/39/40) in tRNA. Its function is as follows. Formation of pseudouridine at positions 38, 39 and 40 in the anticodon stem and loop of transfer RNAs. The protein is tRNA pseudouridine synthase A of Anaplasma phagocytophilum (strain HZ).